The primary structure comprises 128 residues: Large ribosomal subunit protein bL19 (128 aa).

It belongs to the bacterial ribosomal protein bL19 family.

This protein is located at the 30S-50S ribosomal subunit interface and may play a role in the structure and function of the aminoacyl-tRNA binding site. This Herminiimonas arsenicoxydans protein is Large ribosomal subunit protein bL19.